The sequence spans 631 residues: DNA ligase (631 aa).

NAD(+) is bound by residues 37-41 (DAHYD) and 79-80 (ST). K115 serves as the catalytic N6-AMP-lysine intermediate. NAD(+)-binding residues include R131, E160, and K272. C361, C364, C377, and C382 together coordinate Zn(2+). One can recognise a BRCT domain in the interval 539–630 (DVSSPISGKG…SQSSPEQMSL (92 aa)).

The protein belongs to the NAD-dependent DNA ligase family. LigA subfamily. Requires Mg(2+) as cofactor. Mn(2+) serves as cofactor.

The enzyme catalyses NAD(+) + (deoxyribonucleotide)n-3'-hydroxyl + 5'-phospho-(deoxyribonucleotide)m = (deoxyribonucleotide)n+m + AMP + beta-nicotinamide D-nucleotide.. Functionally, DNA ligase that catalyzes the formation of phosphodiester linkages between 5'-phosphoryl and 3'-hydroxyl groups in double-stranded DNA using NAD as a coenzyme and as the energy source for the reaction. It is essential for DNA replication and repair of damaged DNA. This is DNA ligase from Desulfatibacillum aliphaticivorans.